Reading from the N-terminus, the 409-residue chain is Putative protein disulfide-isomerase DDB_G0275025 (409 aa).

Positions 1–21 (MKLINICIFIFAIICIESTFG) are cleaved as a signal peptide. A Thioredoxin domain is found at 28 to 140 (NVINLTKKNF…AKFSLAKLPS (113 aa)). Cys-57 and Cys-60 form a disulfide bridge. Residues 245 to 273 (SNNDNNNNNNNNNNEESTKTTTTEKDPAS) are disordered. Over residues 247-259 (NDNNNNNNNNNNE) the composition is skewed to low complexity. Residues 260 to 273 (ESTKTTTTEKDPAS) show a composition bias toward basic and acidic residues. Positions 406-409 (KDEL) match the Prevents secretion from ER motif.

The protein belongs to the protein disulfide isomerase family.

It localises to the endoplasmic reticulum lumen. It carries out the reaction Catalyzes the rearrangement of -S-S- bonds in proteins.. This chain is Putative protein disulfide-isomerase DDB_G0275025, found in Dictyostelium discoideum (Social amoeba).